Here is a 440-residue protein sequence, read N- to C-terminus: G-protein coupled receptor family C group 5 member C (440 aa).

The signal sequence occupies residues 1 to 22 (MATHRTLLMCLGLPLFFPGALA). The Extracellular segment spans residues 23–49 (QNHAPPGCSPDLDPLYYNLCDRSGAWG). The helical transmembrane segment at 50–70 (IVSEAVAGAGIITTFVLTIIL) threads the bilayer. Over 71 to 84 (VASLPFVQDTKKRS) the chain is Cytoplasmic. Residues 85-105 (LLGTQVFFLLGTLGLFCLVFA) form a helical membrane-spanning segment. Residues 106–119 (CVVKPDFSTCASRR) lie on the Extracellular side of the membrane. Residues 120–140 (FLFGVLFAICFSCLVAHVLSL) traverse the membrane as a helical segment. The Cytoplasmic portion of the chain corresponds to 141 to 155 (NFLTRKNHGPRGWVI). A helical membrane pass occupies residues 156 to 176 (FTVALLLTLVEVIINTEWLII). Over 177 to 207 (TLVRGGGQVSPLGNVSADSTMTSPCAIANMD) the chain is Extracellular. N-linked (GlcNAc...) asparagine glycosylation occurs at Asn190. A helical membrane pass occupies residues 208–228 (FVMALIYVMLLLLTAFLGAWP). The Cytoplasmic portion of the chain corresponds to 229–240 (TLCGRFKRWRKH). The helical transmembrane segment at 241-261 (GVFVLLTTVISIAIWVVWIVM) threads the bilayer. The Extracellular portion of the chain corresponds to 262 to 278 (YTYGNEQHHSPTWDDPT). Residues 279-299 (LAIALAANAWTFVLFYVIPEV) form a helical membrane-spanning segment. Residues 300–440 (SQVTKPSPEQ…QVFRNPYVWD (141 aa)) lie on the Cytoplasmic side of the membrane. Ser343, Ser382, Ser402, and Ser405 each carry phosphoserine. Residue Tyr413 is modified to Phosphotyrosine. At Thr422 the chain carries Phosphothreonine.

It belongs to the G-protein coupled receptor 3 family.

It is found in the cell membrane. Functionally, this retinoic acid-inducible G-protein coupled receptor provide evidence for a possible interaction between retinoid and G-protein signaling pathways. This is G-protein coupled receptor family C group 5 member C (Gprc5c) from Mus musculus (Mouse).